The chain runs to 70 residues: Small ribosomal subunit protein bS21B (70 aa).

It belongs to the bacterial ribosomal protein bS21 family.

This chain is Small ribosomal subunit protein bS21B, found in Cupriavidus metallidurans (strain ATCC 43123 / DSM 2839 / NBRC 102507 / CH34) (Ralstonia metallidurans).